We begin with the raw amino-acid sequence, 151 residues long: 3-dehydroquinate dehydratase (151 aa).

The active-site Proton acceptor is the Tyr24. Substrate-binding residues include Asn76, His82, and Asp89. The active-site Proton donor is His102. Substrate contacts are provided by residues 103-104 and Arg113; that span reads VS.

Belongs to the type-II 3-dehydroquinase family. As to quaternary structure, homododecamer.

It catalyses the reaction 3-dehydroquinate = 3-dehydroshikimate + H2O. It functions in the pathway metabolic intermediate biosynthesis; chorismate biosynthesis; chorismate from D-erythrose 4-phosphate and phosphoenolpyruvate: step 3/7. Its function is as follows. Catalyzes a trans-dehydration via an enolate intermediate. The sequence is that of 3-dehydroquinate dehydratase from Rhodopseudomonas palustris (strain HaA2).